The sequence spans 365 residues: Spermidine/putrescine import ATP-binding protein PotA (365 aa).

An ABC transporter domain is found at 9-239 (IRLTNVTKSY…PINHFVANFI (231 aa)). 41 to 48 (GPSGCGKT) lines the ATP pocket.

The protein belongs to the ABC transporter superfamily. Spermidine/putrescine importer (TC 3.A.1.11.1) family. As to quaternary structure, the complex is composed of two ATP-binding proteins (PotA), two transmembrane proteins (PotB and PotC) and a solute-binding protein (PotD).

The protein resides in the cell membrane. The catalysed reaction is ATP + H2O + polyamine-[polyamine-binding protein]Side 1 = ADP + phosphate + polyamineSide 2 + [polyamine-binding protein]Side 1.. In terms of biological role, part of the ABC transporter complex PotABCD involved in spermidine/putrescine import. Responsible for energy coupling to the transport system. This is Spermidine/putrescine import ATP-binding protein PotA from Lactiplantibacillus plantarum (strain ATCC BAA-793 / NCIMB 8826 / WCFS1) (Lactobacillus plantarum).